Here is a 691-residue protein sequence, read N- to C-terminus: Elongation factor G 1 (691 aa).

In terms of domain architecture, tr-type G spans 8 to 282 (ERVRNIGIAA…AVVDYLPAPQ (275 aa)). GTP contacts are provided by residues 17–24 (AHIDAGKT), 81–85 (DTPGH), and 135–138 (NKMD).

It belongs to the TRAFAC class translation factor GTPase superfamily. Classic translation factor GTPase family. EF-G/EF-2 subfamily.

It is found in the cytoplasm. Functionally, catalyzes the GTP-dependent ribosomal translocation step during translation elongation. During this step, the ribosome changes from the pre-translocational (PRE) to the post-translocational (POST) state as the newly formed A-site-bound peptidyl-tRNA and P-site-bound deacylated tRNA move to the P and E sites, respectively. Catalyzes the coordinated movement of the two tRNA molecules, the mRNA and conformational changes in the ribosome. This chain is Elongation factor G 1, found in Trichodesmium erythraeum (strain IMS101).